The primary structure comprises 362 residues: S-adenosylmethionine-dependent nucleotide dehydratase RSAD2 (362 aa).

The interval 47-73 is disordered; sequence EQPQVRGEPEDTQETQEDGNSTQPTTP. The segment covering 64–73 has biased composition (polar residues); sequence DGNSTQPTTP. The Radical SAM core domain occupies 70–290; it reads PTTPVSVNYH…LERHKEVSCL (221 aa). Cys-84, Cys-88, and Cys-91 together coordinate [4Fe-4S] cluster. Lys-198 is subject to N6-acetyllysine. Lys-207 participates in a covalent cross-link: Glycyl lysine isopeptide (Lys-Gly) (interchain with G-Cter in ubiquitin).

Belongs to the radical SAM superfamily. RSAD2 family. As to quaternary structure, homodimer. Interacts with IRAK1 and TRAF6. Interacts with FPPS. Interacts with HADHB. Interacts (via C-terminus) with VAPA/VAP33 (via C-terminus). The cofactor is [4Fe-4S] cluster. Acetylated by HAT1. HAT1-mediated acetylation of Lys-198 in turn recruits UBE4A that stimulates RSAD2 polyubiquitination leading to proteasomal degradation. In terms of processing, 'Lys-6'-linked polyubiquitination at Lys-207 leads to RSAD2 protein degradation. Expressed at higher levels in atherosclerotic arteries than in normal arteries.

The protein resides in the endoplasmic reticulum membrane. The protein localises to the golgi apparatus. Its subcellular location is the endoplasmic reticulum. It is found in the lipid droplet. It localises to the mitochondrion. The protein resides in the mitochondrion inner membrane. The protein localises to the mitochondrion outer membrane. It catalyses the reaction CTP + AH2 + S-adenosyl-L-methionine = 3'-deoxy-3',4'-didehydro-CTP + 5'-deoxyadenosine + L-methionine + A + H2O + H(+). IRAK1 and TRAF6 synergistically activate RSAD2 increasing its activity with CTP as substrate about 10-fold. Its function is as follows. Interferon-inducible antiviral protein which plays a major role in the cell antiviral state induced by type I and type II interferon. Catalyzes the conversion of cytidine triphosphate (CTP) to 3'-deoxy-3',4'-didehydro-CTP (ddhCTP) via a SAM-dependent radical mechanism. In turn, ddhCTP acts as a chain terminator for the RNA-dependent RNA polymerases from multiple viruses and directly inhibits viral replication. Therefore, inhibits a wide range of DNA and RNA viruses. Also promotes TLR7 and TLR9-dependent production of IFN-beta production in plasmacytoid dendritic cells (pDCs) by facilitating 'Lys-63'-linked ubiquitination of IRAK1 by TRAF6. Plays a role in CD4+ T-cells activation and differentiation. Facilitates T-cell receptor (TCR)-mediated GATA3 activation and optimal T-helper 2 (Th2) cytokine production by modulating NFKB1 and JUNB activities. Can inhibit secretion of soluble proteins. The protein is S-adenosylmethionine-dependent nucleotide dehydratase RSAD2 of Mus musculus (Mouse).